We begin with the raw amino-acid sequence, 423 residues long: Gamma-glutamyl phosphate reductase (423 aa).

Belongs to the gamma-glutamyl phosphate reductase family.

The protein resides in the cytoplasm. The enzyme catalyses L-glutamate 5-semialdehyde + phosphate + NADP(+) = L-glutamyl 5-phosphate + NADPH + H(+). It functions in the pathway amino-acid biosynthesis; L-proline biosynthesis; L-glutamate 5-semialdehyde from L-glutamate: step 2/2. Catalyzes the NADPH-dependent reduction of L-glutamate 5-phosphate into L-glutamate 5-semialdehyde and phosphate. The product spontaneously undergoes cyclization to form 1-pyrroline-5-carboxylate. This is Gamma-glutamyl phosphate reductase from Pseudomonas entomophila (strain L48).